A 524-amino-acid chain; its full sequence is Fusicoccadiene C-8 hydroxylase (524 aa).

A helical transmembrane segment spans residues 16-36 (LQLLCIGPLVYACVSFIIKIV). 2 N-linked (GlcNAc...) asparagine glycosylation sites follow: asparagine 126 and asparagine 344. Cysteine 465 lines the heme pocket. An N-linked (GlcNAc...) asparagine glycan is attached at asparagine 496.

This sequence belongs to the cytochrome P450 family. Requires heme as cofactor.

It is found in the membrane. Its pathway is mycotoxin biosynthesis. Its function is as follows. Cytochrome P450 monooxygenase; part of the 2 gene clusters that mediate the biosynthesis of fusicoccins, diterpene glucosides that display phytohormone-like activity and function as potent activators of plasma membrane H(+)-ATPases in plants by modifying 14-3-3 proteins and cause the plant disease constriction canker. The first step in the pathway is performed by the fusicoccadiene synthase PaFS that possesses both prenyl transferase and terpene cyclase activity, converting isopentenyl diphosphate and dimethylallyl diphosphate into geranylgeranyl diphosphate (GGDP) and successively converting GGDP into fusicocca-2,10(14)-diene, a precursor for fusicoccin H. The second step is the oxidation at the C-8 position by the cytochrome P450 monooxygenase PaP450-2 to yield fusicocca-2,10(14)-diene-8-beta-ol. The cytochrome P450 monooxygenase PaP450-1 then catalyzes the hydroxylation at the C-16 position to produce fusicocca-2,10(14)-diene-8-beta,16-diol. The dioxygenase fc-dox then catalyzes the 16-oxydation of fusicocca-2,10(14)-diene-8-beta,16-diol to yield an aldehyde (8-beta-hydroxyfusicocca-1,10(14)-dien-16-al). The short-chain dehydrogenase/reductase fc-sdr catalyzes the reduction of the aldehyde to yield fusicocca-1,10(14)-diene-8-beta,16-diol. The next step is the hydroxylation at C-9 performed by the cytochrome P450 monooxygenase PaP450-3 that leads to fusicoccin H aglycon which is glycosylated to fusicoccin H by the O-glycosyltransferase PaGT. Hydroxylation at C-12 by the cytochrome P450 monooxygenase PaP450-4 leads then to the production of fusicoccin Q and is followed by methylation by the O-methyltransferase PaMT to yield fusicoccin P. Fusicoccin P is further converted to fusicoccin J via prenylation by the O-glucose prenyltransferase PaPT. Cytochrome P450 monooxygenase PaP450-5 then performs hydroxylation at C-19 to yield dideacetyl-fusicoccin A which is acetylated to 3'-O-deacetyl-fusicoccin A by the O-acetyltransferase PaAT-2. Finally, a another acetylation by the O-acetyltransferase PaAT-1 yields fusicoccin A. The sequence is that of Fusicoccadiene C-8 hydroxylase from Phomopsis amygdali (Fusicoccum amygdali).